The chain runs to 2345 residues: Acetyl-CoA carboxylase 1 (2345 aa).

N-acetylmethionine is present on Met-1. Residues Ser-5, Ser-23, Ser-25, Ser-29, Ser-34, Ser-47, Ser-49, and Ser-52 each carry the phosphoserine modification. The residue at position 57 (Thr-57) is a Phosphothreonine. Ser-77 and Ser-79 each carry phosphoserine. A Phosphoserine; by AMPK modification is found at Ser-79. Residues 116-617 (VIEKVLIANN…DTGWLDRLIA (502 aa)) enclose the Biotin carboxylation domain. The 192-residue stretch at 274-465 (SKRILNVPQD…LPAAQLQIAM (192 aa)) folds into the ATP-grasp domain. ATP is bound at residue 300–357 (AEEVGYPVMIKASEGGGGKGIRKVNNADDFPNLFRQVQAEVPGSPIFVMRLAKQSRHL). Residues Glu-423, Glu-436, and Asn-438 each coordinate Mg(2+). Mn(2+) contacts are provided by Glu-423, Glu-436, and Asn-438. Arg-440 is a catalytic residue. The residue at position 609 (Thr-609) is a Phosphothreonine. One can recognise a Biotinyl-binding domain in the interval 744–818 (FEKENDPSVM…DPGCVIAKMQ (75 aa)). N6-biotinyllysine is present on Lys-785. A phosphoserine mark is found at Ser-834, Ser-1200, Ser-1215, and Ser-1217. At Thr-1226 the chain carries Phosphothreonine. Residues Ser-1258, Ser-1262, and Ser-1272 each carry the phosphoserine modification. At Lys-1333 the chain carries N6-acetyllysine. The CoA carboxyltransferase N-terminal domain maps to 1575–1913 (PYVTKDLLQS…SVHSSVPLLN (339 aa)). Residues 1575-2233 (PYVTKDLLQS…EDLVKKKIHN (659 aa)) form a carboxyltransferase region. 3 residues coordinate CoA: Arg-1822, Lys-2126, and Arg-2128. The CoA carboxyltransferase C-terminal domain occupies 1917-2233 (PIDRIIEFVP…EDLVKKKIHN (317 aa)). A Phosphothreonine modification is found at Thr-2152.

As to quaternary structure, monomer, homodimer, and homotetramer. Can form filamentous polymers. Interacts in its inactive phosphorylated form with the BRCT domains of BRCA1 which prevents ACACA dephosphorylation and inhibits lipid synthesis. Interacts with MID1IP1; interaction with MID1IP1 promotes oligomerization and increases its activity. The cofactor is Mg(2+). Requires Mn(2+) as cofactor. Biotin serves as cofactor. In terms of processing, phosphorylation on Ser-1262 is required for interaction with BRCA1. Post-translationally, phosphorylation at Ser-79 by AMPK inactivates enzyme activity. The biotin cofactor is covalently attached to the central biotinyl-binding domain and is required for the catalytic activity.

Its subcellular location is the cytoplasm. The protein localises to the cytosol. It catalyses the reaction hydrogencarbonate + acetyl-CoA + ATP = malonyl-CoA + ADP + phosphate + H(+). It participates in lipid metabolism; malonyl-CoA biosynthesis; malonyl-CoA from acetyl-CoA: step 1/1. Inhibited by phosphorylation. Citrate promotes oligomerization of the protein into filaments that correspond to the most active form of the carboxylase. Functionally, cytosolic enzyme that catalyzes the carboxylation of acetyl-CoA to malonyl-CoA, the first and rate-limiting step of de novo fatty acid biosynthesis. This is a 2 steps reaction starting with the ATP-dependent carboxylation of the biotin carried by the biotin carboxyl carrier (BCC) domain followed by the transfer of the carboxyl group from carboxylated biotin to acetyl-CoA. This is Acetyl-CoA carboxylase 1 from Mus musculus (Mouse).